Consider the following 113-residue polypeptide: Iron-sulfur cluster insertion protein ErpA (113 aa).

Iron-sulfur cluster is bound by residues cysteine 41, cysteine 105, and cysteine 107.

It belongs to the HesB/IscA family. In terms of assembly, homodimer. Requires iron-sulfur cluster as cofactor.

Its function is as follows. Required for insertion of 4Fe-4S clusters for at least IspG. This chain is Iron-sulfur cluster insertion protein ErpA, found in Vibrio vulnificus (strain CMCP6).